We begin with the raw amino-acid sequence, 443 residues long: Signal recognition particle 54 kDa protein (443 aa).

Residues 107-114 (GIQGSGKT), 189-193 (DTAGR), and 247-250 (TKLD) contribute to the GTP site.

This sequence belongs to the GTP-binding SRP family. SRP54 subfamily. As to quaternary structure, part of the signal recognition particle protein translocation system, which is composed of SRP and FtsY. Archaeal SRP consists of a 7S RNA molecule of 300 nucleotides and two protein subunits: SRP54 and SRP19.

It localises to the cytoplasm. The enzyme catalyses GTP + H2O = GDP + phosphate + H(+). Functionally, involved in targeting and insertion of nascent membrane proteins into the cytoplasmic membrane. Binds to the hydrophobic signal sequence of the ribosome-nascent chain (RNC) as it emerges from the ribosomes. The SRP-RNC complex is then targeted to the cytoplasmic membrane where it interacts with the SRP receptor FtsY. The sequence is that of Signal recognition particle 54 kDa protein from Pyrococcus furiosus (strain ATCC 43587 / DSM 3638 / JCM 8422 / Vc1).